The chain runs to 385 residues: Probable nitrate transporter NarT (385 aa).

Transmembrane regions (helical) follow at residues 14–34, 47–67, 69–89, 97–117, 139–159, 161–181, 205–225, 246–266, 277–297, 302–322, 330–350, and 359–379; these read TLSL…MPYI, IILA…GYLT, IIGA…PIFF, GMLM…SVGV, GNIG…IIGW, TTVR…FIFG, LYYL…FGLF, GVFI…GDKF, IIMI…LFTI, ISIC…SYFA, GIVS…ITYV, and LAFI…GHLY.

It belongs to the major facilitator superfamily. Nitrate/nitrite porter (TC 2.A.1.8) family.

The protein localises to the cell membrane. Its function is as follows. Probably required for nitrate uptake under anoxic conditions. Also possibly involved in excretion of nitrite produced by the dissimilatory reduction of nitrate. The polypeptide is Probable nitrate transporter NarT (narT) (Staphylococcus haemolyticus (strain JCSC1435)).